The chain runs to 247 residues: ATP synthase subunit a, chloroplastic (247 aa).

A run of 5 helical transmembrane segments spans residues 36–56 (GQVLMTSWFVFAVIAILSIAG), 95–115 (IPFLGTLFLFIFVSNWSGALI), 134–154 (INTTVALALLTSTAYFYAGFS), 199–219 (LVVGVLVALVPLVVPIPIMLL), and 220–240 (GLFTSGIQALVFATLAGAYIG).

It belongs to the ATPase A chain family. In terms of assembly, F-type ATPases have 2 components, CF(1) - the catalytic core - and CF(0) - the membrane proton channel. CF(1) has five subunits: alpha(3), beta(3), gamma(1), delta(1), epsilon(1). CF(0) has four main subunits: a, b, b' and c.

It localises to the plastid. The protein resides in the chloroplast thylakoid membrane. Functionally, key component of the proton channel; it plays a direct role in the translocation of protons across the membrane. This chain is ATP synthase subunit a, chloroplastic, found in Tupiella akineta (Green alga).